Reading from the N-terminus, the 916-residue chain is DNA mismatch repair protein MutS (916 aa).

Residues 1–47 (MSEALSVPAAEGENTVTASESPDLAATSARAEKVGKQEKPEKAEKQS) form a disordered region. A compositionally biased stretch (basic and acidic residues) spans 30 to 45 (RAEKVGKQEKPEKAEK). Position 656–663 (656–663 (GPNMGGKS)) interacts with ATP. The span at 843–861 (ADATPTPQMDLFSAQSSPS) shows a compositional bias: polar residues. Residues 843 to 880 (ADATPTPQMDLFSAQSSPSADDEDDKSAGQSAVPPAQA) are disordered.

Belongs to the DNA mismatch repair MutS family.

Its function is as follows. This protein is involved in the repair of mismatches in DNA. It is possible that it carries out the mismatch recognition step. This protein has a weak ATPase activity. The sequence is that of DNA mismatch repair protein MutS from Cupriavidus metallidurans (strain ATCC 43123 / DSM 2839 / NBRC 102507 / CH34) (Ralstonia metallidurans).